The sequence spans 89 residues: MAKESVKARERKKQATVERFAAKRKALKEAGDYVGLDKLPKNASPVRLHNRCKLTGRPRGYMRKFGINRVTFRELAANGKIPGVTRASW.

Belongs to the universal ribosomal protein uS14 family. In terms of assembly, part of the 30S ribosomal subunit. Contacts proteins S3 and S10.

In terms of biological role, binds 16S rRNA, required for the assembly of 30S particles and may also be responsible for determining the conformation of the 16S rRNA at the A site. The protein is Small ribosomal subunit protein uS14 of Cytophaga hutchinsonii (strain ATCC 33406 / DSM 1761 / CIP 103989 / NBRC 15051 / NCIMB 9469 / D465).